Consider the following 316-residue polypeptide: DnaJ homolog subfamily B member 13 (316 aa).

A J domain is found at 4–68 (DYYSVLGITR…MKRGIYDKFG (65 aa)).

Homodimer. Component of the axonemal radial spoke complex 1 (RS1), at least composed of spoke head proteins RSPH1, RSPH3, RSPH9 and the cilia-specific component RSPH4A or sperm-specific component RSPH6A, spoke stalk proteins RSPH14, DNAJB13, DYDC1, ROPN1L and NME5, and the anchor protein IQUB. Interacts with SUN5. Interacts with IQUB. Specifically expressed in testis and trachea.

It is found in the cell projection. It localises to the cilium. Its subcellular location is the flagellum. Functionally, functions as part of axonemal radial spoke complexes that play an important part in the motility of sperm and cilia. This is DnaJ homolog subfamily B member 13 (DNAJB13) from Homo sapiens (Human).